A 1122-amino-acid chain; its full sequence is Histone deacetylase 5 (1122 aa).

Residues 1–24 (MNSPNESDGMSGREPSLEILPRTS) are disordered. A Glycyl lysine isopeptide (Lys-Gly) (interchain with G-Cter in SUMO2) cross-link involves residue lysine 35. Disordered stretches follow at residues 41-60 (AMPS…VELR) and 196-281 (KEPT…SSPL). The span at 247–258 (DSRDDFPLRKTA) shows a compositional bias: basic and acidic residues. Serine 259 is modified (phosphoserine; by AMPK, CaMK1, SIK1 and PKD/PRKD1). Residues 272-281 (KVAERRSSPL) are compositionally biased toward basic and acidic residues. Residue threonine 292 is modified to Phosphothreonine; by PKC. 2 disordered regions span residues 302–343 (GAGP…NIPT) and 481–504 (MRTV…LPQS). The segment covering 312–327 (NSAPGSGPSSPNSSHS) has biased composition (low complexity). Residues 328 to 340 (TIAENGFTGSVPN) show a composition bias toward polar residues. The span at 494-504 (SRTQSSPLPQS) shows a compositional bias: low complexity. Serine 498 bears the Phosphoserine; by AMPK, CaMK1, SIK1 and PKD/PRKD1 mark. Lysine 533 carries the N6-acetyllysine modification. The tract at residues 536–625 (TKTGELPRQP…GPDLEEPGAG (90 aa)) is disordered. A compositionally biased stretch (acidic residues) spans 581 to 621 (STQEDLEEEDEEDDGEEEEDCIQVKDEEGESGAEEGPDLEE). Serine 611 and serine 661 each carry phosphoserine. The interval 684–1028 (GVVYDTFMLK…VSALLSVELQ (345 aa)) is histone deacetylase. 4 residues coordinate Zn(2+): cysteine 696, cysteine 698, histidine 704, and cysteine 781. Residue histidine 833 is part of the active site. Residues 1081–1122 (EEAETVSAMALLSVGAEQAQAAAAREHSPRPAEEPMEQEPAL) carry the Nuclear export signal motif. The disordered stretch occupies residues 1097-1122 (EQAQAAAAREHSPRPAEEPMEQEPAL). A compositionally biased stretch (basic and acidic residues) spans 1104 to 1113 (AREHSPRPAE). Serine 1108 carries the phosphoserine modification.

Belongs to the histone deacetylase family. HD type 2 subfamily. In terms of assembly, interacts with AHRR, BAHD1, BCOR, HDAC7, HDAC9, CTBP1, MEF2C, NCOR2, NRIP1, PHB2 and a 14-3-3 chaperone protein. Interacts with BCL6, DDIT3/CHOP, GRK5, KDM5B and MYOCD. Interacts with EP300 in the presence of TFAP2C. Interacts with ANKRA2. Interacts with CUL7 (as part of the 3M complex); negatively regulated by ANKRA2. Interacts with ZBTB7B; the interaction allows the recruitment of HDAC4 on CD8 loci for deacetylation and possible inhibition of CD8 genes expression. Interacts with RARA. Phosphorylated by AMPK, CaMK1, SIK1 and PRKD1 at Ser-259 and Ser-498. The phosphorylation is required for the export to the cytoplasm and inhibition. Phosphorylated by the PKC kinases PKN1 and PKN2, impairing nuclear import. Phosphorylated by GRK5, leading to nuclear export of HDAC5 and allowing MEF2-mediated transcription. In terms of processing, ubiquitinated. Polyubiquitination however does not lead to its degradation. In terms of tissue distribution, ubiquitous.

It localises to the nucleus. It is found in the cytoplasm. The catalysed reaction is N(6)-acetyl-L-lysyl-[histone] + H2O = L-lysyl-[histone] + acetate. Functionally, responsible for the deacetylation of lysine residues on the N-terminal part of the core histones (H2A, H2B, H3 and H4). Histone deacetylation gives a tag for epigenetic repression and plays an important role in transcriptional regulation, cell cycle progression and developmental events. Histone deacetylases act via the formation of large multiprotein complexes. Involved in muscle maturation by repressing transcription of myocyte enhancer MEF2C. During muscle differentiation, it shuttles into the cytoplasm, allowing the expression of myocyte enhancer factors. Involved in the MTA1-mediated epigenetic regulation of ESR1 expression in breast cancer. Serves as a corepressor of RARA and causes its deacetylation. In association with RARA, plays a role in the repression of microRNA-10a and thereby in the inflammatory response. The protein is Histone deacetylase 5 (HDAC5) of Homo sapiens (Human).